The following is a 144-amino-acid chain: Maximins 4/H3 type 2 (144 aa).

An N-terminal signal peptide occupies residues 1–18 (MNFKYIIAVSFFIASAYA). A propeptide spanning residues 19–43 (RRNEKDVQSLSQRDVLEEESLREIR) is cleaved from the precursor. Asn70 is modified (asparagine amide). Positions 74–123 (TAEDHEVMKRLEAVMRDLDSLDHPEEASERETRGFNQEEIANLFTKKEKR) are excised as a propeptide. At Ile143 the chain carries Isoleucine amide.

The protein belongs to the bombinin family. As to expression, expressed by the skin glands.

The protein localises to the secreted. In terms of biological role, maximin-4 shows antibacterial activity against both Gram-positive and Gram-negative bacteria. It also shows antimicrobial activity against the fungus C.albicans, but not against A.flavus nor P.uticale. It has little hemolytic activity. It does not possess a significant cytotoxicity against tumor cell lines. It does not possess a significant anti-HIV activity. Maximin-H3 shows antibacterial activity against both Gram-positive and Gram-negative bacteria. It also shows antimicrobial activity against the fungus C.albicans. Shows strong hemolytic activity. In Bombina maxima (Giant fire-bellied toad), this protein is Maximins 4/H3 type 2.